The chain runs to 608 residues: UvrABC system protein C (608 aa).

In terms of domain architecture, GIY-YIG spans 13 to 91 (HDPGVYRMFD…IKTFQPRYNV (79 aa)). One can recognise a UVR domain in the interval 201–236 (QQVLDHLIAKMETASRALDFENAARFRDQIQAVRAV).

This sequence belongs to the UvrC family. As to quaternary structure, interacts with UvrB in an incision complex.

The protein resides in the cytoplasm. Functionally, the UvrABC repair system catalyzes the recognition and processing of DNA lesions. UvrC both incises the 5' and 3' sides of the lesion. The N-terminal half is responsible for the 3' incision and the C-terminal half is responsible for the 5' incision. The chain is UvrABC system protein C from Actinobacillus succinogenes (strain ATCC 55618 / DSM 22257 / CCUG 43843 / 130Z).